The chain runs to 423 residues: Zinc transporter ZIP13 (423 aa).

At 1–15 (MPGCPCPGIGMAGQR) the chain is on the lumenal side. Residues 16–36 (LLFLAALALELLGGAGGSQQA) form a helical membrane-spanning segment. At 37 to 68 (LRSRGVAAACRLDSKESESWGALLSGERLETW) the chain is on the cytoplasmic side. The helical transmembrane segment at 69 to 89 (ICSLLGSLMVGLSGVFPLLVI) threads the bilayer. The Lumenal portion of the chain corresponds to 90-108 (PLEMGTTLRSEAGARRLKQ). The chain crosses the membrane as a helical span at residues 109–129 (LLSFALGGLLGNVFLHLLPEA). Residues 130–149 (WAYTNSASSGGERQSLQQQQ) lie on the Cytoplasmic side of the membrane. Residues 150 to 170 (QLGLWVIAGFLTFLVLEKLFF) traverse the membrane as a helical segment. Over 171 to 235 (DSKGKEETSQ…TIDNFTHGLA (65 aa)) the chain is Lumenal. A helical membrane pass occupies residues 236–256 (VAASFLVSKKIGLLTTMAILL). Residues 257-262 (HEIPHE) carry the XEXPHE-motif motif. The Cytoplasmic segment spans residues 257-278 (HEIPHEVGDFAILLRAGFDRWS). Residues 279-299 (AAKLQLSTALGGLLGACFAIC) traverse the membrane as a helical segment. Topologically, residues 300-368 (AQSPKGVGTG…RAPPPATEET (69 aa)) are lumenal. Residues 369–389 (VAWILPFTSGGFLYIALVNVL) form a helical membrane-spanning segment. Topologically, residues 390 to 401 (PDLLEEDDPWRS) are cytoplasmic. A helical transmembrane segment spans residues 402 to 422 (LQQVLLLCAGIVVMVLFSVFV). Residue glutamate 423 is a topological domain, lumenal.

Belongs to the ZIP transporter (TC 2.A.5) family. In terms of assembly, homodimer.

Its subcellular location is the golgi apparatus membrane. The protein resides in the cytoplasmic vesicle membrane. The protein localises to the endoplasmic reticulum membrane. It catalyses the reaction Zn(2+)(in) = Zn(2+)(out). In terms of biological role, functions as a zinc transporter transporting Zn(2+) from the Golgi apparatus to the cytosol and thus influences the zinc level at least in areas of the cytosol. May regulate beige adipocyte differentiation. This is Zinc transporter ZIP13 from Bos taurus (Bovine).